Here is a 52-residue protein sequence, read N- to C-terminus: Large ribosomal subunit protein eL40 (52 aa).

Belongs to the eukaryotic ribosomal protein eL40 family.

The polypeptide is Large ribosomal subunit protein eL40 (Thermococcus onnurineus (strain NA1)).